The following is a 122-amino-acid chain: MAQSVSATRRISRLRRHTRLRKKLSGTAERPRLVVHRSARHIHVQLVNDLNGTTVAAASSIEADVRGVPGDKKARSVRVGQLIAERAKAAGIDTVVFDRGGYTYGGRIAALADAARENGLSF.

The protein belongs to the universal ribosomal protein uL18 family. In terms of assembly, part of the 50S ribosomal subunit; part of the 5S rRNA/L5/L18/L25 subcomplex. Contacts the 5S and 23S rRNAs.

In terms of biological role, this is one of the proteins that bind and probably mediate the attachment of the 5S RNA into the large ribosomal subunit, where it forms part of the central protuberance. This is Large ribosomal subunit protein uL18 from Mycobacterium tuberculosis (strain ATCC 25177 / H37Ra).